The chain runs to 378 residues: Quinolinate synthase (378 aa).

Iminosuccinate is bound by residues His59 and Ser80. Residue Cys125 participates in [4Fe-4S] cluster binding. Iminosuccinate contacts are provided by residues Tyr151–Asn153 and Ser168. Cys212 serves as a coordination point for [4Fe-4S] cluster. Residues His238–Glu240 and Thr255 contribute to the iminosuccinate site. [4Fe-4S] cluster is bound at residue Cys309.

This sequence belongs to the quinolinate synthase family. Type 1 subfamily. [4Fe-4S] cluster is required as a cofactor.

It localises to the cytoplasm. The catalysed reaction is iminosuccinate + dihydroxyacetone phosphate = quinolinate + phosphate + 2 H2O + H(+). It functions in the pathway cofactor biosynthesis; NAD(+) biosynthesis; quinolinate from iminoaspartate: step 1/1. Catalyzes the condensation of iminoaspartate with dihydroxyacetone phosphate to form quinolinate. The sequence is that of Quinolinate synthase from Burkholderia cenocepacia (strain HI2424).